A 123-amino-acid chain; its full sequence is Large ribosomal subunit protein bL19 (123 aa).

This sequence belongs to the bacterial ribosomal protein bL19 family.

This protein is located at the 30S-50S ribosomal subunit interface and may play a role in the structure and function of the aminoacyl-tRNA binding site. In Ureaplasma parvum serovar 3 (strain ATCC 27815 / 27 / NCTC 11736), this protein is Large ribosomal subunit protein bL19.